Here is a 353-residue protein sequence, read N- to C-terminus: Colistin resistance protein EmrA (353 aa).

Residues 21–41 form a helical membrane-spanning segment; that stretch reads WGVFSVLLLFLVAGILYYFFV. Residues 132-204 adopt a coiled-coil conformation; that stretch reads VVAAQADLAR…QASRAQLLAD (73 aa).

It belongs to the membrane fusion protein (MFP) (TC 8.A.1) family.

The protein localises to the cell inner membrane. In terms of biological role, probably part of an efflux pump system that contributes to adaptation to osmotic stress and resistance to colistin. The chain is Colistin resistance protein EmrA from Acinetobacter baumannii (strain ATCC 17978 / DSM 105126 / CIP 53.77 / LMG 1025 / NCDC KC755 / 5377).